Reading from the N-terminus, the 686-residue chain is MSKIRVHEYAKKHNISSKDLMTKLKEMNIEVSNHMTMLDDEVVNKLDNEYQTEKPSVADEFEVEEKVVRSKKNSNKKKKKGKGNEDKRQENFAGRQQTQTVETPDKITFSGSLTVGDLAKKLSKEPSEIIKKLFMLGIMATINQDLDKDTIELIANDYGIEVEEEVIVSETEFETFIDEQDDEENLKERPAVVTIMGHVDHGKTTLLDSIRNSKVTAGEAGGITQHIGAYQVEVNDKKITFLDTPGHAAFTTMRARGAQVTDITILVVAADDGVMPQTVEAINHAKAAGVPIIVAVNKMDKPAANPDRVMQELTEYELVPEAWGGDTIFVPISAIQGEGIDNLLEMILLVSEVEEYKANPNRYATGTVIEAQLDKGKGTIATLLVQNGTLRVGDPIVVGTTFGRVRAMVSDIGRRVKVAGPSTPVEITGLNEVPQAGDRFMAFADEKKARQIGESRAQEALLAQRGEKSKLSLEDLFQQIQEGDVKEINLIVKADVQGSVEAMAASLRKIDVEGVKVKIIHTGVGAITESDIILASASNAIVIGFNVRPDVNAKRTAELENVDIRLHRIIYKVIEEIEAAMQGMLDPEFEEKVIGQAEVRQTFKVTKVGTIAGCYVTDGKITRDSGVRIIRDGVVIYEGQLDTLKRFKDDVKEVAQNYECGITIEKYNDLKEGDIIEAYIMEEVKR.

Residues 53–105 form a disordered region; the sequence is EKPSVADEFEVEEKVVRSKKNSNKKKKKGKGNEDKRQENFAGRQQTQTVETPD. Residues 69 to 81 are compositionally biased toward basic residues; it reads RSKKNSNKKKKKG. In terms of domain architecture, tr-type G spans 188–357; sequence ERPAVVTIMG…LLVSEVEEYK (170 aa). Positions 197–204 are G1; sequence GHVDHGKT. Residue 197–204 coordinates GTP; the sequence is GHVDHGKT. The G2 stretch occupies residues 222 to 226; sequence GITQH. A G3 region spans residues 243-246; that stretch reads DTPG. Residues 243 to 247 and 297 to 300 each bind GTP; these read DTPGH and NKMD. The tract at residues 297–300 is G4; the sequence is NKMD. Residues 333–335 are G5; it reads SAI.

The protein belongs to the TRAFAC class translation factor GTPase superfamily. Classic translation factor GTPase family. IF-2 subfamily.

It localises to the cytoplasm. Its function is as follows. One of the essential components for the initiation of protein synthesis. Protects formylmethionyl-tRNA from spontaneous hydrolysis and promotes its binding to the 30S ribosomal subunits. Also involved in the hydrolysis of GTP during the formation of the 70S ribosomal complex. This chain is Translation initiation factor IF-2, found in Bacillus cereus (strain ATCC 10987 / NRS 248).